The primary structure comprises 325 residues: MPIAPDRVRHPEKANRPDNPIQRKPEWLRVKAPTSPEYGETRSLMRGLRLNTVCEEAACPNIGECWKKKHATFMILGAVCTRACAFCNVATGRPDQLDPHEPEKVAEAVAHLKLEHIVVTSVDRDDLEDGGAGHFARTIRAIRAAAPGTTIEVLTPDFMKKKGAVETVVEARPDVFNHNLETAPRLYPTIRPGARYFTSLQLLARVKEIDPSMFTKSGIMVGLGETKEEVFQVMDDLRAADVDFMTIGQYLAPTPKHAKVDRFVTPDEFAGYVTVGRGKGFLMVASSPLTRSSYHAGADFERLRAAREAKLAGRPVAAPEATSAE.

The disordered stretch occupies residues 1 to 24 (MPIAPDRVRHPEKANRPDNPIQRK). [4Fe-4S] cluster contacts are provided by Cys54, Cys59, Cys65, Cys80, Cys84, Cys87, and Ser293. Residues 66-282 (WKKKHATFMI…VTVGRGKGFL (217 aa)) form the Radical SAM core domain.

It belongs to the radical SAM superfamily. Lipoyl synthase family. The cofactor is [4Fe-4S] cluster.

The protein resides in the cytoplasm. The enzyme catalyses [[Fe-S] cluster scaffold protein carrying a second [4Fe-4S](2+) cluster] + N(6)-octanoyl-L-lysyl-[protein] + 2 oxidized [2Fe-2S]-[ferredoxin] + 2 S-adenosyl-L-methionine + 4 H(+) = [[Fe-S] cluster scaffold protein] + N(6)-[(R)-dihydrolipoyl]-L-lysyl-[protein] + 4 Fe(3+) + 2 hydrogen sulfide + 2 5'-deoxyadenosine + 2 L-methionine + 2 reduced [2Fe-2S]-[ferredoxin]. It functions in the pathway protein modification; protein lipoylation via endogenous pathway; protein N(6)-(lipoyl)lysine from octanoyl-[acyl-carrier-protein]: step 2/2. Catalyzes the radical-mediated insertion of two sulfur atoms into the C-6 and C-8 positions of the octanoyl moiety bound to the lipoyl domains of lipoate-dependent enzymes, thereby converting the octanoylated domains into lipoylated derivatives. The sequence is that of Lipoyl synthase from Rhodospirillum centenum (strain ATCC 51521 / SW).